A 235-amino-acid polypeptide reads, in one-letter code: Phosphatidylserine decarboxylase proenzyme (235 aa).

Ser204 (schiff-base intermediate with substrate; via pyruvic acid) is an active-site residue. Ser204 carries the pyruvic acid (Ser); by autocatalysis modification.

It belongs to the phosphatidylserine decarboxylase family. PSD-A subfamily. Heterodimer of a large membrane-associated beta subunit and a small pyruvoyl-containing alpha subunit. The cofactor is pyruvate. In terms of processing, is synthesized initially as an inactive proenzyme. Formation of the active enzyme involves a self-maturation process in which the active site pyruvoyl group is generated from an internal serine residue via an autocatalytic post-translational modification. Two non-identical subunits are generated from the proenzyme in this reaction, and the pyruvate is formed at the N-terminus of the alpha chain, which is derived from the carboxyl end of the proenzyme. The post-translation cleavage follows an unusual pathway, termed non-hydrolytic serinolysis, in which the side chain hydroxyl group of the serine supplies its oxygen atom to form the C-terminus of the beta chain, while the remainder of the serine residue undergoes an oxidative deamination to produce ammonia and the pyruvoyl prosthetic group on the alpha chain.

The protein resides in the cell membrane. The catalysed reaction is a 1,2-diacyl-sn-glycero-3-phospho-L-serine + H(+) = a 1,2-diacyl-sn-glycero-3-phosphoethanolamine + CO2. Its pathway is phospholipid metabolism; phosphatidylethanolamine biosynthesis; phosphatidylethanolamine from CDP-diacylglycerol: step 2/2. In terms of biological role, catalyzes the formation of phosphatidylethanolamine (PtdEtn) from phosphatidylserine (PtdSer). In Mycobacterium sp. (strain JLS), this protein is Phosphatidylserine decarboxylase proenzyme.